Reading from the N-terminus, the 778-residue chain is Protein translocase subunit SecA 2 (778 aa).

ATP contacts are provided by residues glutamine 94, 112 to 116 (GEGKT), and aspartate 501.

This sequence belongs to the SecA family. In terms of assembly, monomer and homodimer. Part of the essential Sec protein translocation apparatus which comprises SecA, SecYEG and auxiliary proteins SecDF. Other proteins may also be involved.

Its subcellular location is the cell membrane. The protein localises to the cytoplasm. It catalyses the reaction ATP + H2O + cellular proteinSide 1 = ADP + phosphate + cellular proteinSide 2.. In terms of biological role, part of the Sec protein translocase complex. Interacts with the SecYEG preprotein conducting channel. Has a central role in coupling the hydrolysis of ATP to the transfer of proteins into and across the cell membrane, serving as an ATP-driven molecular motor driving the stepwise translocation of polypeptide chains across the membrane. This is Protein translocase subunit SecA 2 from Mycobacterium leprae (strain TN).